The primary structure comprises 593 residues: Aspartate--tRNA(Asp/Asn) ligase (593 aa).

L-aspartate is bound at residue Glu-182. The interval 206–209 is aspartate; that stretch reads QLFK. Arg-228 lines the L-aspartate pocket. Residues 228 to 230 and Gln-237 each bind ATP; that span reads RDE. His-455 contacts L-aspartate. Glu-489 lines the ATP pocket. Residue Arg-496 coordinates L-aspartate. Residue 541 to 544 participates in ATP binding; the sequence is GLDR.

This sequence belongs to the class-II aminoacyl-tRNA synthetase family. Type 1 subfamily. In terms of assembly, homodimer.

The protein resides in the cytoplasm. The catalysed reaction is tRNA(Asx) + L-aspartate + ATP = L-aspartyl-tRNA(Asx) + AMP + diphosphate. In terms of biological role, aspartyl-tRNA synthetase with relaxed tRNA specificity since it is able to aspartylate not only its cognate tRNA(Asp) but also tRNA(Asn). Reaction proceeds in two steps: L-aspartate is first activated by ATP to form Asp-AMP and then transferred to the acceptor end of tRNA(Asp/Asn). The sequence is that of Aspartate--tRNA(Asp/Asn) ligase from Geotalea uraniireducens (strain Rf4) (Geobacter uraniireducens).